An 85-amino-acid chain; its full sequence is Neurotoxin beta-KTx 17 (85 aa).

A signal peptide spans 1 to 20 (MKQYIFFLALIVLVSTFAEA). A propeptide spanning residues 21-37 (GKKTEILDKVKKVFSKG) is cleaved from the precursor. Residues 49–85 (ELGCPFIEKWCEDHCESKKQVGKCENFDCSCVKLGGK) form the BetaSPN-type CS-alpha/beta domain. 3 disulfides stabilise this stretch: C52-C72, C59-C77, and C63-C79.

This sequence belongs to the long chain scorpion toxin family. Class 2 subfamily. In terms of tissue distribution, expressed by the venom gland.

Its subcellular location is the secreted. Its function is as follows. Has a very weak effect to block voltage-gated potassium channel Kv1.1/KCNA1. This chain is Neurotoxin beta-KTx 17, found in Lychas mucronatus (Chinese swimming scorpion).